The following is a 264-amino-acid chain: MENVLRVVILGFIQGIAEFLPISSSGHLLLLKKFMHIDLPIVFDIYLHLATVLVVMIYYCRRILELVAVLVKFVLGKTTECDFAKLRLILLILIITIITAFIGIFIEMFKGLFTLNLVLINFIVTSILLFLLESRIVIFDLKRNILLAGCLIGTMQGIGAMPGISRSGITIFASVLLGFSRSESFEISFLSLIPIVFGSLLLKYKELFESDMLFSIFEINLGAIIAFLVGLFSISLFVKMLQDSKLYYFSVYLIILVSLVYFLF.

8 helical membrane-spanning segments follow: residues 7–27 (VVIL…SSGH), 39–59 (LPIV…MIYY), 89–109 (ILLI…IEMF), 112–132 (LFTL…LFLL), 145–165 (ILLA…PGIS), 182–202 (SESF…SLLL), 212–232 (MLFS…VGLF), and 244–264 (SKLY…YFLF).

The protein belongs to the UppP family.

It is found in the cell inner membrane. The catalysed reaction is di-trans,octa-cis-undecaprenyl diphosphate + H2O = di-trans,octa-cis-undecaprenyl phosphate + phosphate + H(+). In terms of biological role, catalyzes the dephosphorylation of undecaprenyl diphosphate (UPP). Confers resistance to bacitracin. This chain is Undecaprenyl-diphosphatase, found in Borrelia hermsii (strain HS1 / DAH).